Reading from the N-terminus, the 144-residue chain is Ribosomal RNA large subunit methyltransferase H (144 aa).

Residues Leu63, Gly92, and 111–116 each bind S-adenosyl-L-methionine; that span reads LSPMTF.

Belongs to the RNA methyltransferase RlmH family. In terms of assembly, homodimer.

The protein localises to the cytoplasm. It carries out the reaction pseudouridine(1915) in 23S rRNA + S-adenosyl-L-methionine = N(3)-methylpseudouridine(1915) in 23S rRNA + S-adenosyl-L-homocysteine + H(+). Specifically methylates the pseudouridine at position 1915 (m3Psi1915) in 23S rRNA. The polypeptide is Ribosomal RNA large subunit methyltransferase H (Synechococcus sp. (strain CC9605)).